We begin with the raw amino-acid sequence, 315 residues long: MRQNNNITEFVLLGFSQDPGVQKALFVMFLLTYLVTVVGNLLIVVDIIASPSLGSPMYFFLACLSFIDAAYSTTISPKLIVGLFCDKKTISFQGCMGQLFIDHFFGGAEVFLLVVMACDRYVAICKPLHYLTIMNRQVCFLLLVVAMIGGFVHSAFQIVVYSLPFCGPNVIVHFSCDMHPLLELACTDTYFIGLTVVVNSGAICMVIFNLLLISYGVILSSLKTYSQEKRGKALSTCSSGSTVVVLFFVPCIFIYVRPVSNFPTDKFMTVFYTIITHMLSPLIYTLRNSEMRNAIEKLLGKKLTIFIIGGVSVLM.

At 1-23 (MRQNNNITEFVLLGFSQDPGVQK) the chain is on the extracellular side. A glycan (N-linked (GlcNAc...) asparagine) is linked at Asn-6. The helical transmembrane segment at 24–47 (ALFVMFLLTYLVTVVGNLLIVVDI) threads the bilayer. The Cytoplasmic segment spans residues 48 to 55 (IASPSLGS). The chain crosses the membrane as a helical span at residues 56–77 (PMYFFLACLSFIDAAYSTTISP). Over 78–98 (KLIVGLFCDKKTISFQGCMGQ) the chain is Extracellular. A disulfide bridge links Cys-95 with Cys-186. The chain crosses the membrane as a helical span at residues 99-118 (LFIDHFFGGAEVFLLVVMAC). The Cytoplasmic segment spans residues 119 to 137 (DRYVAICKPLHYLTIMNRQ). Residues 138–156 (VCFLLLVVAMIGGFVHSAF) form a helical membrane-spanning segment. Topologically, residues 157 to 192 (QIVVYSLPFCGPNVIVHFSCDMHPLLELACTDTYFI) are extracellular. A helical transmembrane segment spans residues 193-216 (GLTVVVNSGAICMVIFNLLLISYG). Residues 217–232 (VILSSLKTYSQEKRGK) are Cytoplasmic-facing. A helical membrane pass occupies residues 233-255 (ALSTCSSGSTVVVLFFVPCIFIY). The Extracellular portion of the chain corresponds to 256–266 (VRPVSNFPTDK). The helical transmembrane segment at 267-286 (FMTVFYTIITHMLSPLIYTL) threads the bilayer. The Cytoplasmic portion of the chain corresponds to 287 to 315 (RNSEMRNAIEKLLGKKLTIFIIGGVSVLM).

The protein belongs to the G-protein coupled receptor 1 family.

The protein localises to the cell membrane. Its function is as follows. Odorant receptor. In Homo sapiens (Human), this protein is Olfactory receptor 4A5 (OR4A5).